A 135-amino-acid polypeptide reads, in one-letter code: Small ribosomal subunit protein uS9 (135 aa).

Belongs to the universal ribosomal protein uS9 family.

This chain is Small ribosomal subunit protein uS9 (rps9), found in Archaeoglobus fulgidus (strain ATCC 49558 / DSM 4304 / JCM 9628 / NBRC 100126 / VC-16).